The sequence spans 389 residues: Probable peptide chain release factor 1, mitochondrial (389 aa).

The residue at position 259 (Gln259) is an N5-methylglutamine.

Belongs to the prokaryotic/mitochondrial release factor family. In terms of processing, methylation of glutamine in the GGQ triplet is conserved from bacteria to mammals.

The protein localises to the mitochondrion. In terms of biological role, mitochondrial peptide chain release factor that directs the termination of translation in response to the peptide chain termination codons UAA and UAG. The protein is Probable peptide chain release factor 1, mitochondrial of Caenorhabditis elegans.